The following is a 180-amino-acid chain: Large ribosomal subunit protein uL16 (180 aa).

This sequence belongs to the universal ribosomal protein uL16 family.

The sequence is that of Large ribosomal subunit protein uL16 from Pyrobaculum aerophilum (strain ATCC 51768 / DSM 7523 / JCM 9630 / CIP 104966 / NBRC 100827 / IM2).